Consider the following 203-residue polypeptide: Non-specific lipid transfer protein GPI-anchored 20 (203 aa).

A signal peptide spans 1–21; that stretch reads MSKIISLVVAMIAVLALPIRG. 4 disulfides stabilise this stretch: C29–C74, C40–C58, C59–C99, and C72–C108. N46, N50, and N88 each carry an N-linked (GlcNAc...) asparagine glycan. The tract at residues 119 to 182 is disordered; sequence GPAATFGPSM…TSRPSETPSS (64 aa). Polar residues-rich tracts occupy residues 144–156 and 169–179; these read AAQT…TRPF and DGGSTSRPSET. S172 is lipidated: GPI-anchor amidated serine. Positions 173 to 203 are cleaved as a propeptide — removed in mature form; the sequence is TSRPSETPSSAYALSPSLLFFSIALVALKFY.

It belongs to the plant LTP family. Expressed in seedlings, preferentially in hypocotyls and roots. Also observed in siliques and sepals.

It is found in the cell membrane. In terms of biological role, probable lipid transfer protein. In Arabidopsis thaliana (Mouse-ear cress), this protein is Non-specific lipid transfer protein GPI-anchored 20.